A 313-amino-acid chain; its full sequence is E3 ubiquitin-protein ligase RNF126 (313 aa).

The residue at position 2 (Ala2) is an N-acetylalanine. Ser5 carries the post-translational modification Phosphoserine. Residues 5–101 (SPQPGRYFCH…FEIPTFPPGA (97 aa)) are required for interaction with BAG6. The Zn(2+) site is built by Cys13, Cys16, Cys29, and Cys32. A C4-type zinc finger spans residues 13–32 (CHCCSVEIVPRLPDYICPRC). Disordered stretches follow at residues 42-64 (EETR…SRQQ) and 96-128 (TFPP…ARQP). Over residues 47–64 (AENGSAPSTASADQSRQQ) the composition is skewed to polar residues. A compositionally biased stretch (basic and acidic residues) spans 104–117 (DDSRDPESRREREQ). Positions 118 to 128 (HSRHRYGARQP) are enriched in basic residues. The segment at 203–306 (TGPPPADKEK…SSSSSSSPGN (104 aa)) is sufficient for interaction with AICDA. The RING-type zinc finger occupies 232 to 273 (CPVCKDDYGLGEHVRQLPCNHLFHDGCIVPWLEQHDSCPVCR). Positions 280-313 (NTATDPPGLAGVSFSSSSSSSSSSPGNENPASSS) are disordered. Positions 292-313 (SFSSSSSSSSSSPGNENPASSS) are enriched in low complexity.

In terms of assembly, interacts with CCDC50, EGFR, FLT3 and SCAMP3. Interacts with BAG6 (via ubiquitin-like domain); required for BAG6-dependent ubiquitination of proteins mislocalized to the cytosol. Interacts with CDKN1A. Interacts with AICDA. In terms of processing, ubiquitinated. May undergo autoubiquitination.

It localises to the cytoplasm. The protein localises to the nucleus. The enzyme catalyses S-ubiquitinyl-[E2 ubiquitin-conjugating enzyme]-L-cysteine + [acceptor protein]-L-lysine = [E2 ubiquitin-conjugating enzyme]-L-cysteine + N(6)-ubiquitinyl-[acceptor protein]-L-lysine.. It functions in the pathway protein modification; protein ubiquitination. Functionally, E3 ubiquitin-protein ligase that mediates ubiquitination oF target proteins. Depending on the associated E2 ligase, mediates 'Lys-27'-, 'Lys-29'-, 'Lys-48'- and/or 'Lys-63'-linked polyubiquitination of substrates. Part of a BAG6-dependent quality control process ensuring that proteins of the secretory pathway that are mislocalized to the cytosol are degraded by the proteasome. Probably acts by providing the ubiquitin ligase activity associated with the BAG6 complex and be responsible for ubiquitination of the hydrophobic mislocalized proteins and their targeting to the proteasome. May also play a role in the endosomal recycling of IGF2R, the cation-independent mannose-6-phosphate receptor. May play a role in the endosomal sorting and degradation of several membrane receptors including EGFR, FLT3, MET and CXCR4, by mediating their ubiquitination. By ubiquitinating CDKN1A/p21 and targeting it for degradation, may also promote cell proliferation. May monoubiquitinate AICDA. Acts as a regulator of DNA repair by mediating 'Lys-27'- and 'Lys-29'-linked polyubiquitination of MRE11, thereby promoting the exonuclease activity of MRE11. This is E3 ubiquitin-protein ligase RNF126 from Bos taurus (Bovine).